Reading from the N-terminus, the 188-residue chain is Mitochondrial import receptor subunit TOM20 homolog (188 aa).

Over 1–12 (MTDTLFGFNKSN) the chain is Mitochondrial intermembrane. A helical transmembrane segment spans residues 13-31 (VVLAAGVAGAAFLGYCIYF). Residues 32-188 (DHKRINAPDY…ELIDDTDDLE (157 aa)) are Cytoplasmic-facing. Disordered stretches follow at residues 48–67 (KRRA…PAGG) and 155–188 (ADEA…DDLE). Over residues 58–67 (MAARRPPAGG) the composition is skewed to low complexity.

Belongs to the Tom20 family. As to quaternary structure, forms part of the preprotein translocase complex of the outer mitochondrial membrane (TOM complex).

The protein resides in the mitochondrion outer membrane. Its function is as follows. Central component of the receptor complex responsible for the recognition and translocation of cytosolically synthesized mitochondrial preproteins. Together with TOM22 functions as the transit peptide receptor at the surface of the mitochondrion outer membrane and facilitates the movement of preproteins into the translocation pore. The polypeptide is Mitochondrial import receptor subunit TOM20 homolog (tomm-20) (Caenorhabditis briggsae).